A 334-amino-acid polypeptide reads, in one-letter code: Oligopeptide transport ATP-binding protein OppF (334 aa).

An ABC transporter domain is found at 12 to 265; it reads LEIADLKVHF…PLHPYTKALM (254 aa). 57-64 serves as a coordination point for ATP; the sequence is GESGCGKS.

This sequence belongs to the ABC transporter superfamily. The complex is composed of two ATP-binding proteins (OppD and OppF), two transmembrane proteins (OppB and OppC) and a solute-binding protein (OppA).

The protein resides in the cell inner membrane. It carries out the reaction a [peptide](out) + ATP + H2O = a [peptide](in) + ADP + phosphate + H(+). The enzyme catalyses L-alanyl-gamma-D-glutamyl-meso-2,6-diaminopimelate(out) + ATP + H2O = L-alanyl-gamma-D-glutamyl-meso-2,6-diaminopimelate(in) + ADP + phosphate + H(+). In terms of biological role, part of the ABC transporter complex OppABCDF involved in the uptake of oligopeptides, including the cell wall murein tripeptide L-alanyl-gamma-D-glutamyl-meso-diaminopimelate. Probably responsible for energy coupling to the transport system. Plays an important nutritional role and is involved in the recycling of cell wall peptides. This chain is Oligopeptide transport ATP-binding protein OppF, found in Salmonella typhimurium (strain LT2 / SGSC1412 / ATCC 700720).